The following is a 174-amino-acid chain: Disulfide bond formation protein B (174 aa).

Residues 1 to 12 (MLNWIDTAPRRI) lie on the Cytoplasmic side of the membrane. A helical membrane pass occupies residues 13–29 (LALISAACVAMLAFGMY). The Periplasmic segment spans residues 30–47 (LQHVVGLEPCPMCIVQRY). A disulfide bond links cysteine 39 and cysteine 42. The helical transmembrane segment at 48–64 (ALIGVAVFAGLASARGQ) threads the bilayer. At 65–69 (KGWWM) the chain is on the cytoplasmic side. A helical membrane pass occupies residues 70 to 87 (TWSVLALVAAGFGAFVAA). At 88 to 143 (RQSWLQWYPPEIATCGRDFYGMIENYPISRAIPMIFRGSGDCTAVDWTFLGGSIAN) the chain is on the periplasmic side. Cysteine 102 and cysteine 129 form a disulfide bridge. A helical membrane pass occupies residues 144-162 (WSFVWFLLFAVLLLVLLVR). Topologically, residues 163–174 (GGRGAPDTLARA) are cytoplasmic.

The protein belongs to the DsbB family.

The protein localises to the cell inner membrane. Functionally, required for disulfide bond formation in some periplasmic proteins. Acts by oxidizing the DsbA protein. This is Disulfide bond formation protein B from Acidovorax sp. (strain JS42).